The following is a 178-amino-acid chain: Mediator of RNA polymerase II transcription subunit 31 (178 aa).

The segment covering 129–140 (EGQELEESEDEA) has biased composition (acidic residues). Positions 129-178 (EGQELEESEDEADIRQKDTEDEDDEETMKKPDADTAEKNSTTSTVSKKEK) are disordered. Positions 155 to 165 (TMKKPDADTAE) are enriched in basic and acidic residues. A compositionally biased stretch (polar residues) spans 166–178 (KNSTTSTVSKKEK).

It belongs to the Mediator complex subunit 31 family. As to quaternary structure, component of the Mediator complex.

Its subcellular location is the nucleus. In terms of biological role, component of the Mediator complex, a coactivator involved in the regulated transcription of nearly all RNA polymerase II-dependent genes. Mediator functions as a bridge to convey information from gene-specific regulatory proteins to the basal RNA polymerase II transcription machinery. Mediator is recruited to promoters by direct interactions with regulatory proteins and serves as a scaffold for the assembly of a functional preinitiation complex with RNA polymerase II and the general transcription factors. This is Mediator of RNA polymerase II transcription subunit 31 from Caenorhabditis elegans.